Consider the following 137-residue polypeptide: Large ribosomal subunit protein uL16 (137 aa).

It belongs to the universal ribosomal protein uL16 family. In terms of assembly, part of the 50S ribosomal subunit.

Its function is as follows. Binds 23S rRNA and is also seen to make contacts with the A and possibly P site tRNAs. The sequence is that of Large ribosomal subunit protein uL16 from Cereibacter sphaeroides (strain ATCC 17025 / ATH 2.4.3) (Rhodobacter sphaeroides).